Reading from the N-terminus, the 402-residue chain is Propionate kinase (402 aa).

Asn11 and Lys18 together coordinate ATP. Residue Asn11 participates in Mg(2+) binding. Residue Arg86 participates in substrate binding. Asp143 acts as the Proton donor/acceptor in catalysis. Residues His175, 203–207 (HLGNG), 278–280 (DLR), and 326–330 (GIGEN) contribute to the ATP site.

Belongs to the acetokinase family. TdcD subfamily. As to quaternary structure, homodimer. Requires Mg(2+) as cofactor.

The enzyme catalyses propanoate + ATP = propanoyl phosphate + ADP. It participates in amino-acid degradation; L-threonine degradation via propanoate pathway; propanoate from L-threonine: step 4/4. Catalyzes the conversion of propionyl phosphate and ADP to propionate and ATP. The protein is Propionate kinase of Enterobacter sp. (strain 638).